The sequence spans 797 residues: Homoaconitase, mitochondrial (797 aa).

Residues Met1–Tyr47 constitute a mitochondrion transit peptide. [4Fe-4S] cluster is bound by residues Cys404, Cys471, and Cys474.

This sequence belongs to the aconitase/IPM isomerase family. [4Fe-4S] cluster is required as a cofactor.

The protein localises to the mitochondrion. It catalyses the reaction (2R,3S)-homoisocitrate = cis-homoaconitate + H2O. The protein operates within amino-acid biosynthesis; L-lysine biosynthesis via AAA pathway; L-alpha-aminoadipate from 2-oxoglutarate: step 3/5. In terms of biological role, catalyzes the reversible hydration of cis-homoaconitate to (2R,3S)-homoisocitrate, a step in the alpha-aminoadipate pathway for lysine biosynthesis. This is Homoaconitase, mitochondrial (LYS4) from Chaetomium globosum (strain ATCC 6205 / CBS 148.51 / DSM 1962 / NBRC 6347 / NRRL 1970) (Soil fungus).